A 471-amino-acid chain; its full sequence is Trehalose-binding lipoprotein LpqY (471 aa).

An N-terminal signal peptide occupies residues 1–28 (MDGRQVVRARRWCATAAVALMTASTVAA). A lipid anchor (N-palmitoyl cysteine) is attached at C29. The S-diacylglycerol cysteine moiety is linked to residue C29. Alpha,alpha-trehalose-binding residues include N45, E46, Q79, D100, N154, Y198, W279, Y281, G354, and R424. A disulfide bridge links C57 with C375.

Belongs to the bacterial solute-binding protein 1 family. As to quaternary structure, monomer. The complex is composed of two ATP-binding proteins (SugC), two transmembrane proteins (SugA and SugB) and a solute-binding protein (LpqY).

Its subcellular location is the cell inner membrane. Part of the ABC transporter complex LpqY-SugA-SugB-SugC, which is highly specific for uptake of trehalose. Involved in the recycling of extracellular trehalose released from trehalose-containing molecules synthesized by M.thermoresistibile. Trehalose uptake is essential for virulence. Binds deuterated trehalose with similar high affinity to trehalose, trehalose analogs including galactotrehalose, 4-azido-4-deoxy-trehalose, 6-azido-6-deoxy-trehalose, 3-azido-3-deoxy-trehalose and mannotrehalose in the order of decreasing affinity, respectively, and 2-azido-2-deoxy-trehalose and kojibiose (alpha1,2-glycosidic bond) with very low affinity. Does not recognize single glucose, 6-amino-6-deoxy-trehalose, trehalose-6-phosphate, nigerose (alpha1,3-glycosidic bond), maltose (alpha1,4-glycosidic bond), isomaltose (alpha1,6-glycosidic bond) or glycerophosphocholine. Decreased recognition of alpha,beta-trehalose and almost no recognition of beta,beta-trehalose. Substrate specificity indicates a strict requirement for an alpha1,1-linked disaccharide. The chain is Trehalose-binding lipoprotein LpqY from Mycolicibacterium thermoresistibile (strain ATCC 19527 / DSM 44167 / CIP 105390 / JCM 6362 / NCTC 10409 / 316) (Mycobacterium thermoresistibile).